We begin with the raw amino-acid sequence, 155 residues long: Protein SprT-like (155 aa).

Residues glutamine 7–threonine 145 enclose the SprT-like domain. A Zn(2+)-binding site is contributed by histidine 67. Residue glutamate 68 is part of the active site. Histidine 71 lines the Zn(2+) pocket.

This sequence belongs to the SprT family. Requires Zn(2+) as cofactor.

The protein localises to the cytoplasm. The polypeptide is Protein SprT-like (Listeria monocytogenes serotype 4b (strain CLIP80459)).